A 162-amino-acid polypeptide reads, in one-letter code: Ribosome maturation factor RimP (162 aa).

The protein belongs to the RimP family.

It is found in the cytoplasm. Its function is as follows. Required for maturation of 30S ribosomal subunits. This Syntrophotalea carbinolica (strain DSM 2380 / NBRC 103641 / GraBd1) (Pelobacter carbinolicus) protein is Ribosome maturation factor RimP.